The sequence spans 137 residues: 1,4-dihydroxy-2-naphthoyl-CoA hydrolase (137 aa).

Aspartate 13 is a catalytic residue.

Belongs to the 4-hydroxybenzoyl-CoA thioesterase family. DHNA-CoA hydrolase subfamily.

The catalysed reaction is 1,4-dihydroxy-2-naphthoyl-CoA + H2O = 1,4-dihydroxy-2-naphthoate + CoA + H(+). It functions in the pathway cofactor biosynthesis; phylloquinone biosynthesis. Its pathway is quinol/quinone metabolism; 1,4-dihydroxy-2-naphthoate biosynthesis; 1,4-dihydroxy-2-naphthoate from chorismate: step 7/7. Functionally, catalyzes the hydrolysis of 1,4-dihydroxy-2-naphthoyl-CoA (DHNA-CoA) to 1,4-dihydroxy-2-naphthoate (DHNA), a reaction involved in phylloquinone (vitamin K1) biosynthesis. The sequence is that of 1,4-dihydroxy-2-naphthoyl-CoA hydrolase from Crocosphaera subtropica (strain ATCC 51142 / BH68) (Cyanothece sp. (strain ATCC 51142)).